We begin with the raw amino-acid sequence, 387 residues long: 1-deoxy-D-xylulose 5-phosphate reductoisomerase (387 aa).

Residues threonine 10, glycine 11, serine 12, isoleucine 13, glycine 36, asparagine 38, and asparagine 122 each coordinate NADPH. Lysine 123 contacts 1-deoxy-D-xylulose 5-phosphate. Glutamate 124 provides a ligand contact to NADPH. Aspartate 148 is a binding site for Mn(2+). Residues serine 149, glutamate 150, serine 174, and histidine 197 each coordinate 1-deoxy-D-xylulose 5-phosphate. Glutamate 150 lines the Mn(2+) pocket. Glycine 203 is a binding site for NADPH. 1-deoxy-D-xylulose 5-phosphate is bound by residues serine 210, asparagine 215, lysine 216, and glutamate 219. Glutamate 219 lines the Mn(2+) pocket.

The protein belongs to the DXR family. Requires Mg(2+) as cofactor. Mn(2+) is required as a cofactor.

The catalysed reaction is 2-C-methyl-D-erythritol 4-phosphate + NADP(+) = 1-deoxy-D-xylulose 5-phosphate + NADPH + H(+). The protein operates within isoprenoid biosynthesis; isopentenyl diphosphate biosynthesis via DXP pathway; isopentenyl diphosphate from 1-deoxy-D-xylulose 5-phosphate: step 1/6. Catalyzes the NADPH-dependent rearrangement and reduction of 1-deoxy-D-xylulose-5-phosphate (DXP) to 2-C-methyl-D-erythritol 4-phosphate (MEP). This is 1-deoxy-D-xylulose 5-phosphate reductoisomerase from Chloroherpeton thalassium (strain ATCC 35110 / GB-78).